A 4639-amino-acid chain; its full sequence is Dynein heavy chain, cytoplasmic (4639 aa).

The tract at residues Met-1–Phe-1856 is stem. Coiled coils occupy residues Leu-530–Gln-565, Ser-774–Ser-794, and Asp-1264–Arg-1368. 4 AAA regions span residues Tyr-1857 to Ser-2084, Glu-2166 to Leu-2437, Glu-2541 to Gly-2790, and Val-2884 to Thr-3153. ATP is bound by residues Gly-1895–Thr-1902, Gly-2210–Ser-2217, Gly-2580–Thr-2587, and Gly-2922–Thr-2929. Coiled-coil stretches lie at residues Gly-3189–Lys-3261, Ala-3382–Thr-3478, and Glu-3723–Thr-3782. Residues Gly-3189–Thr-3478 form a stalk region. AAA stretches follow at residues Leu-3539–Gln-3768 and Ala-3989–Thr-4205.

This sequence belongs to the dynein heavy chain family. In terms of assembly, consists of at least two heavy chains and a number of intermediate and light chains.

It is found in the cytoplasm. The protein localises to the cytoskeleton. In terms of biological role, cytoplasmic dynein acts as a motor for the intracellular retrograde motility of vesicles and organelles along microtubules. Dynein has ATPase activity; the force-producing power stroke is thought to occur on release of ADP. This chain is Dynein heavy chain, cytoplasmic (Dhc64C), found in Drosophila melanogaster (Fruit fly).